Here is a 283-residue protein sequence, read N- to C-terminus: Polyamine aminopropyltransferase (283 aa).

The PABS domain maps to Glu-2–Lys-237. Gln-31 provides a ligand contact to S-methyl-5'-thioadenosine. Positions 62 and 86 each coordinate spermidine. S-methyl-5'-thioadenosine contacts are provided by residues Glu-106 and Glu-137–Gly-138. Asp-155 functions as the Proton acceptor in the catalytic mechanism. Asp-155–Asp-158 is a binding site for spermidine. Pro-162 serves as a coordination point for S-methyl-5'-thioadenosine.

It belongs to the spermidine/spermine synthase family. As to quaternary structure, homodimer or homotetramer.

The protein localises to the cytoplasm. It carries out the reaction S-adenosyl 3-(methylsulfanyl)propylamine + putrescine = S-methyl-5'-thioadenosine + spermidine + H(+). Its pathway is amine and polyamine biosynthesis; spermidine biosynthesis; spermidine from putrescine: step 1/1. Functionally, catalyzes the irreversible transfer of a propylamine group from the amino donor S-adenosylmethioninamine (decarboxy-AdoMet) to putrescine (1,4-diaminobutane) to yield spermidine. The protein is Polyamine aminopropyltransferase of Lachnoclostridium phytofermentans (strain ATCC 700394 / DSM 18823 / ISDg) (Clostridium phytofermentans).